Here is a 394-residue protein sequence, read N- to C-terminus: Guanine nucleotide-binding protein G(s) subunit alpha (394 aa).

The interval 1–25 (MGCLGDSKTEDQRNEEKAQREANKK) is disordered. A lipid anchor (N-palmitoyl glycine) is attached at Gly-2. Cys-3 is lipidated: S-palmitoyl cysteine. Over residues 7 to 25 (SKTEDQRNEEKAQREANKK) the composition is skewed to basic and acidic residues. In terms of domain architecture, G-alpha spans 39 to 394 (ATHRLLLLGA…RMHLRQYELL (356 aa)). Residues 42–55 (RLLLLGAGESGKST) form a G1 motif region. A GTP-binding site is contributed by 47–55 (GAGESGKST). Ser-54 serves as a coordination point for Mg(2+). The segment at 68–90 (FNGEGGEEDPQAARSNSDGEKAT) is disordered. The interval 196–204 (DLLRCRVLT) is G2 motif. Residues 197–204 (LLRCRVLT), 223–227 (DVGGQ), 292–295 (NKQD), and Ala-366 each bind GTP. Thr-204 is a Mg(2+) binding site. The tract at residues 219-228 (FHMFDVGGQR) is G3 motif. Residues 288–295 (ILFLNKQD) form a G4 motif region. The interval 364 to 369 (TCAVDT) is G5 motif.

This sequence belongs to the G-alpha family. G(s) subfamily. In terms of assembly, heterotrimeric G proteins are composed of 3 units; alpha, beta and gamma. The alpha chain contains the guanine nucleotide binding site. Interacts with CRY1; the interaction may block GPCR-mediated regulation of cAMP concentrations. Interacts with ADCY6 and stimulates its adenylyl cyclase activity. Interacts with ADCY2 and ADCY5. Stimulates the ADCY5 adenylyl cyclase activity. Interaction with SASH1.

It is found in the cell membrane. In terms of biological role, guanine nucleotide-binding proteins (G proteins) function as transducers in numerous signaling pathways controlled by G protein-coupled receptors (GPCRs). Signaling involves the activation of adenylyl cyclases, resulting in increased levels of the signaling molecule cAMP. GNAS functions downstream of several GPCRs, including beta-adrenergic receptors. Stimulates the Ras signaling pathway via RAPGEF2. In Cricetulus longicaudatus (Long-tailed dwarf hamster), this protein is Guanine nucleotide-binding protein G(s) subunit alpha (GNAS).